The sequence spans 374 residues: 8-amino-7-oxononanoate synthase (374 aa).

Residues arginine 22 and arginine 29 each contribute to the substrate site. 109 to 110 (GY) provides a ligand contact to pyridoxal 5'-phosphate. Histidine 134 contributes to the substrate binding site. Pyridoxal 5'-phosphate contacts are provided by residues serine 182, 207-210 (DDAH), and 227-230 (TLSK). An N6-(pyridoxal phosphate)lysine modification is found at lysine 230. Threonine 339 lines the substrate pocket.

Belongs to the class-II pyridoxal-phosphate-dependent aminotransferase family. BioF subfamily. As to quaternary structure, homodimer. Pyridoxal 5'-phosphate is required as a cofactor.

It carries out the reaction 6-carboxyhexanoyl-[ACP] + L-alanine + H(+) = (8S)-8-amino-7-oxononanoate + holo-[ACP] + CO2. Its pathway is cofactor biosynthesis; biotin biosynthesis. Its function is as follows. Catalyzes the decarboxylative condensation of pimeloyl-[acyl-carrier protein] and L-alanine to produce 8-amino-7-oxononanoate (AON), [acyl-carrier protein], and carbon dioxide. The protein is 8-amino-7-oxononanoate synthase of Methylobacterium radiotolerans (strain ATCC 27329 / DSM 1819 / JCM 2831 / NBRC 15690 / NCIMB 10815 / 0-1).